A 321-amino-acid chain; its full sequence is Putative zinc finger CCCH domain-containing protein 9 (321 aa).

2 disordered regions span residues 1–59 (MADA…PGKK) and 181–269 (REAE…NLQE). Over residues 10 to 29 (EAERRSDETESRSIKEPKEK) the composition is skewed to basic and acidic residues. The segment at 55 to 83 (RPGKKDCQFYLKNGLCRYRSSCRFNHPTQ) adopts a C3H1-type zinc-finger fold. The stretch at 164–290 (TEWRFERERM…EARLRLEQIR (127 aa)) forms a coiled coil. Composition is skewed to basic and acidic residues over residues 181–224 (REAE…REAQ) and 231–244 (RQRD…REAQ).

The protein is Putative zinc finger CCCH domain-containing protein 9 of Arabidopsis thaliana (Mouse-ear cress).